Here is a 1148-residue protein sequence, read N- to C-terminus: MGELSPVCLYLLLQGLLLCNTGAARNLNELKMECPHTIRLGQGLVVGSVELPSLPIQQVETLKLESSCNFDLHTSTAGQQSFTKWTWEIKGDLAENTQASSTSFQTKSSEVNLRGLCLIPTLVVETAARMRKTIACYDLSCNQTVCQPTVYLMGPIQTCITTKSCLLSLGDQRIQVNYEKTYCVSGDLVEGICFNPIHTMALSQPSHTYDIMTMMVRCFLVIKKVTSGDSMKIEKNFETLVQKNGCTANNFQGYYICLIGSSSEPLYVPALDDYRSAEVLSRMAFAPHGEDHDIEKNAVSAMRIAGKVTGKVPSTESSDTVQGIAFSGSPLYTSTGVLTSKDDPVYIWAPGIIMEGNHSICEKKTLPLTWTGFISLPGEIEKTTQCTVFCTLAGPGADCEAYSETGIFNISSPTCLINRVQRFRGSEQQIKFVCQRVDMDITVYCNGMKKVILTKTLVIGQCIYTFTSIFSLIPGVAHSLAVELCVPGLHGWATMLLLLTFCFGWVLIPTITMILLKILIAFAYLCSKYNTDSKFRILIEKVKREYQKTMGSMVCEVCQYECETAKELESHRKSCSIGSCPYCLNPSEATTSALQAHFKVCKLRSRFQENLRKSLTVYEPMQGCYRTLSLFRYRSRFFVGLVWCVLLVHHLIVWAASAETQNLNAGWTDTAHGSRIIPMKTDLELDFSLQSSASYTYRRQLQNPANEQEKIPFHLQLSKQVIHAEIQHLGHWMDATFNLKTAFHCYGSCEKYAYPWQTAGCFIEKDYEYETGWGCNPPDCPGVGTGCTACGVYLDKLKSVGKVFKIVSLRYTRKVCIQLGTEQTCKTVDSNDCLITTSVKVCLIGTISKFQPSDTLLFLGPLQQGGLIFKQWCTTTCQFGDPGDIMSTPTGMKCPELNGSFRKKCAFATTPVCQFDGNTISGYKRMIATKDSFQSFNVTEPHISTSALEWIDPDSSLRDHINVIVSRDLSFQDLSETPCQIDLATASIDGAWGSGVGFNLVCTVSLTECSAFLTSIKACDAAMCYGSTTANLVRGQNTIHIVGKGGHSGSKFMCCHDTKCSSTGLVAAAPHLDRVTPYNQADSDKIFDDGAPECGMSCWFKKSGEWILGVLNGNWMVVAVLVVLLILSILLFTLCCPRRPSYRKEHKP.

The signal sequence occupies residues 1 to 23 (MGELSPVCLYLLLQGLLLCNTGA). Topologically, residues 24 to 495 (ARNLNELKME…VPGLHGWATM (472 aa)) are lumenal. 6 disulfide bridges follow: Cys34–Cys159, Cys68–Cys165, Cys117–Cys136, Cys141–Cys146, Cys183–Cys193, and Cys218–Cys257. N-linked (GlcNAc...) asparagine; by host glycosylation occurs at Asn142. N-linked (GlcNAc...) asparagine; by host glycosylation is present at Asn357. Cystine bridges form between Cys386–Cys445, Cys390–Cys399, Cys415–Cys434, and Cys462–Cys485. Asn409 is a glycosylation site (N-linked (GlcNAc...) asparagine; by host). The helical transmembrane segment at 496-516 (LLLLTFCFGWVLIPTITMILL) threads the bilayer. The Cytoplasmic segment spans residues 517 to 637 (KILIAFAYLC…LSLFRYRSRF (121 aa)). Residues 526 to 543 (CSKYNTDSKFRILIEKVK) are binding to the ribonucleoprotein. 2 CCHC-type zinc fingers span residues 555-575 (CEVC…RKSC) and 580-601 (CPYC…FKVC). Binding to the ribonucleoprotein stretches follow at residues 598–615 (FKVC…RKSL), 602–613 (KLRSRFQENLRK), and 621–635 (MQGC…RYRS). The ITAM domain occupies 621 to 644 (MQGCYRTLSLFRYRSRFFVGLVWC). Positions 625–628 (YRTL) match the YxxL motif. The chain crosses the membrane as a helical span at residues 638-658 (FVGLVWCVLLVHHLIVWAASA). Residues 659–1114 (ETQNLNAGWT…EWILGVLNGN (456 aa)) are Lumenal-facing. Cystine bridges form between Cys745-Cys780, Cys749-Cys787, Cys761-Cys894, Cys775-Cys905, Cys790-Cys913, Cys816-Cys825, Cys833-Cys842, and Cys873-Cys877. A fusion loop region spans residues 767–787 (YEYETGWGCNPPDCPGVGTGC). Asn937 is a glycosylation site (N-linked (GlcNAc...) asparagine; by host). Cystine bridges form between Cys979-Cys1009, Cys1002-Cys1054, Cys1019-Cys1024, Cys1055-Cys1060, and Cys1094-Cys1098. A helical membrane pass occupies residues 1115 to 1135 (WMVVAVLVVLLILSILLFTLC). Binding to the ribonucleoprotein regions lie at residues 1131–1143 (LFTL…PSYR) and 1131–1148 (LFTL…EHKP). At 1136 to 1148 (CPRRPSYRKEHKP) the chain is on the cytoplasmic side.

This sequence belongs to the hantavirus envelope glycoprotein family. Homodimer. Homotetramer; forms heterotetrameric Gn-Gc spikes in the pre-fusion conformation. Interacts (via C-terminus) with the nucleoprotein. Interacts with host TUFM; this interaction contributes to the virus-induced degradation of mitochondria by autophagy, which leads to degradation of host MAVS and inhibition of type I interferon (IFN) responses. Interacts with host MAP1LC3B; this interaction contributes to the virus-induced degradation of mitochondria by autophagy, which leads to degradation of host MAVS and inhibition of type I interferon (IFN) responses. As to quaternary structure, homodimer. Homotetramer; forms heterotetrameric Gn-Gc spikes in the pre-fusion conformation. Homotrimer; forms homotrimer in the post-fusion conformation at acidic pH. Interacts (via C-terminus) with the nucleoprotein. Envelope polyprotein precursor is quickly cleaved in vivo just after synthesis, presumably by host signal peptidase.

Its subcellular location is the virion membrane. The protein localises to the host cell surface. It is found in the host Golgi apparatus membrane. The protein resides in the host endoplasmic reticulum membrane. It localises to the host mitochondrion. In terms of biological role, forms homotetramers with glycoprotein C at the surface of the virion. Attaches the virion to host cell receptors including integrin ITGAV/ITGB3. This attachment induces virion internalization predominantly through clathrin-dependent endocytosis. Mediates the assembly and budding of infectious virus particles through its interaction with the nucleocapsid protein and the viral genome. May dysregulate normal immune and endothelial cell responses through an ITAM motif. Translocates to mitochondria, binds to host TUFM and recruits MAP1LC3B. These interactions induce mitochondrial autophagy and therefore destruction of host MAVS leading to inhibition of type I interferon (IFN) responses. Concomitant breakdown of glycoprotein N is apparently prevented by the nucleoprotein that may inhibit Gn-stimulated autophagosome-lysosome fusion. Interacts with the viral genomic RNA. Its function is as follows. Forms homotetramers with glycoprotein N at the surface of the virion. Attaches the virion to host cell receptors including integrin ITGAV/ITGB3. This attachment induces virion internalization predominantly through clathrin-dependent endocytosis. Class II fusion protein that promotes fusion of viral membrane with host endosomal membrane after endocytosis of the virion. This chain is Envelopment polyprotein (GP), found in Homo sapiens (Human).